A 277-amino-acid polypeptide reads, in one-letter code: Undecaprenyl-diphosphatase (277 aa).

Transmembrane regions (helical) follow at residues 11-31 (WWQA…PISS), 47-67 (AGAS…LIYF), 96-116 (VGIL…KAIW), 123-143 (LWVI…AEQT), 153-173 (LGIW…IPGV), 197-217 (SFLL…ISEF), 227-247 (LGTL…IQFL), and 254-274 (LFIV…ALGF).

This sequence belongs to the UppP family.

It is found in the cell inner membrane. The catalysed reaction is di-trans,octa-cis-undecaprenyl diphosphate + H2O = di-trans,octa-cis-undecaprenyl phosphate + phosphate + H(+). Catalyzes the dephosphorylation of undecaprenyl diphosphate (UPP). Confers resistance to bacitracin. The sequence is that of Undecaprenyl-diphosphatase from Synechococcus sp. (strain JA-2-3B'a(2-13)) (Cyanobacteria bacterium Yellowstone B-Prime).